We begin with the raw amino-acid sequence, 361 residues long: Phosphoserine aminotransferase (361 aa).

An L-glutamate-binding site is contributed by Arg-43. Pyridoxal 5'-phosphate is bound by residues 77–78, Trp-103, Thr-153, Asp-172, and Gln-195; that span reads AS. Lys-196 bears the N6-(pyridoxal phosphate)lysine mark. 237–238 contributes to the pyridoxal 5'-phosphate binding site; the sequence is NT.

This sequence belongs to the class-V pyridoxal-phosphate-dependent aminotransferase family. SerC subfamily. As to quaternary structure, homodimer. Pyridoxal 5'-phosphate serves as cofactor.

Its subcellular location is the cytoplasm. It carries out the reaction O-phospho-L-serine + 2-oxoglutarate = 3-phosphooxypyruvate + L-glutamate. The enzyme catalyses 4-(phosphooxy)-L-threonine + 2-oxoglutarate = (R)-3-hydroxy-2-oxo-4-phosphooxybutanoate + L-glutamate. The protein operates within amino-acid biosynthesis; L-serine biosynthesis; L-serine from 3-phospho-D-glycerate: step 2/3. Its pathway is cofactor biosynthesis; pyridoxine 5'-phosphate biosynthesis; pyridoxine 5'-phosphate from D-erythrose 4-phosphate: step 3/5. Its function is as follows. Catalyzes the reversible conversion of 3-phosphohydroxypyruvate to phosphoserine and of 3-hydroxy-2-oxo-4-phosphonooxybutanoate to phosphohydroxythreonine. In Desulfotalea psychrophila (strain LSv54 / DSM 12343), this protein is Phosphoserine aminotransferase.